The following is a 185-amino-acid chain: Ribosome-recycling factor (185 aa).

It belongs to the RRF family.

The protein resides in the cytoplasm. Its function is as follows. Responsible for the release of ribosomes from messenger RNA at the termination of protein biosynthesis. May increase the efficiency of translation by recycling ribosomes from one round of translation to another. The polypeptide is Ribosome-recycling factor (Streptococcus equi subsp. equi (strain 4047)).